Consider the following 824-residue polypeptide: Glycerol-3-phosphate acyltransferase (824 aa).

Residues 302 to 307 carry the HXXXXD motif motif; the sequence is CHRSHM.

Belongs to the GPAT/DAPAT family.

It is found in the cell inner membrane. It catalyses the reaction sn-glycerol 3-phosphate + an acyl-CoA = a 1-acyl-sn-glycero-3-phosphate + CoA. The protein operates within phospholipid metabolism; CDP-diacylglycerol biosynthesis; CDP-diacylglycerol from sn-glycerol 3-phosphate: step 1/3. The sequence is that of Glycerol-3-phosphate acyltransferase from Actinobacillus pleuropneumoniae serotype 5b (strain L20).